A 319-amino-acid chain; its full sequence is ADP-L-glycero-D-manno-heptose-6-epimerase (319 aa).

NADP(+)-binding positions include 10–11, 31–32, Lys-38, Lys-53, and 79–83; these read FI, DD, and EGACS. Tyr-144 serves as the catalytic Proton acceptor. Lys-148 provides a ligand contact to NADP(+). Position 173 (Asn-173) interacts with substrate. NADP(+) contacts are provided by Val-174 and Lys-182. Lys-182 functions as the Proton acceptor in the catalytic mechanism. Residues Ser-184, His-191, 205 to 208, Arg-218, and Tyr-282 contribute to the substrate site; that span reads FEGC.

This sequence belongs to the NAD(P)-dependent epimerase/dehydratase family. HldD subfamily. As to quaternary structure, homopentamer. The cofactor is NADP(+).

The catalysed reaction is ADP-D-glycero-beta-D-manno-heptose = ADP-L-glycero-beta-D-manno-heptose. Its pathway is nucleotide-sugar biosynthesis; ADP-L-glycero-beta-D-manno-heptose biosynthesis; ADP-L-glycero-beta-D-manno-heptose from D-glycero-beta-D-manno-heptose 7-phosphate: step 4/4. Functionally, catalyzes the interconversion between ADP-D-glycero-beta-D-manno-heptose and ADP-L-glycero-beta-D-manno-heptose via an epimerization at carbon 6 of the heptose. The sequence is that of ADP-L-glycero-D-manno-heptose-6-epimerase from Aeromonas salmonicida (strain A449).